A 344-amino-acid chain; its full sequence is L-rhamnose-proton symporter (344 aa).

Helical transmembrane passes span 4–24 (AITM…CFYA), 38–58 (WSVG…ALLL), 68–88 (FSLS…IGNI), 101–121 (MGIG…TPII), 137–157 (TLLG…AGQL), 175–195 (LVLA…MNAA), 214–234 (LPSY…FCFI), 259–279 (VLLS…YAWG), 290–310 (ISWM…GLVL), and 323–343 (VLSL…IGMA).

This sequence belongs to the L-rhamnose transporter (TC 2.A.7.6) family.

Its subcellular location is the cell inner membrane. It carries out the reaction L-rhamnopyranose(in) + H(+)(in) = L-rhamnopyranose(out) + H(+)(out). In terms of biological role, uptake of L-rhamnose across the cytoplasmic membrane with the concomitant transport of protons into the cell (symport system). The chain is L-rhamnose-proton symporter from Shigella dysenteriae serotype 1 (strain Sd197).